A 1527-amino-acid polypeptide reads, in one-letter code: DNA (cytosine-5)-methyltransferase 1A (1527 aa).

2 disordered regions span residues 1–62 (MAKS…PKRA) and 661–718 (GDTK…KEIK). Composition is skewed to acidic residues over residues 25-36 (EPVENENLESEF) and 664-692 (KEEDQNEPKEIDDDQEENEDNDAEEEVNV). The span at 709-718 (SSADTRKEIK) shows a compositional bias: basic and acidic residues. BAH domains are found at residues 742–874 (LSIS…FSLP) and 910–1049 (ITYN…KQLP). An SAM-dependent MTase C5-type domain is found at 1092 to 1526 (LATLDIFAGC…RKLKQAIDAK (435 aa)). Residue cysteine 1197 is part of the active site.

Belongs to the class I-like SAM-binding methyltransferase superfamily. C5-methyltransferase family. In terms of tissue distribution, expressed in roots and inflorescences. Expressed in roots, panicles, anthers, pistils, endosperm and imbibed embryos. Expressed in tissues containing actively replicating and dividing cells, such as shoot and root meristems.

The protein localises to the nucleus. It catalyses the reaction a 2'-deoxycytidine in DNA + S-adenosyl-L-methionine = a 5-methyl-2'-deoxycytidine in DNA + S-adenosyl-L-homocysteine + H(+). Probably methylates CpG residues and maintains DNA methylation. May be involved in methylation-dependent gene silencing. May play a minor role in the maintenance of DNA methylation. This is DNA (cytosine-5)-methyltransferase 1A from Oryza sativa subsp. japonica (Rice).